The chain runs to 464 residues: tRNA(Ile)-lysidine synthase (464 aa).

Residue 26–31 (SGGPDS) coordinates ATP.

The protein belongs to the tRNA(Ile)-lysidine synthase family.

It is found in the cytoplasm. It carries out the reaction cytidine(34) in tRNA(Ile2) + L-lysine + ATP = lysidine(34) in tRNA(Ile2) + AMP + diphosphate + H(+). In terms of biological role, ligates lysine onto the cytidine present at position 34 of the AUA codon-specific tRNA(Ile) that contains the anticodon CAU, in an ATP-dependent manner. Cytidine is converted to lysidine, thus changing the amino acid specificity of the tRNA from methionine to isoleucine. In Geobacillus kaustophilus (strain HTA426), this protein is tRNA(Ile)-lysidine synthase.